We begin with the raw amino-acid sequence, 89 residues long: Small ribosomal subunit protein uS15 (89 aa).

Belongs to the universal ribosomal protein uS15 family. As to quaternary structure, part of the 30S ribosomal subunit. Forms a bridge to the 50S subunit in the 70S ribosome, contacting the 23S rRNA.

Functionally, one of the primary rRNA binding proteins, it binds directly to 16S rRNA where it helps nucleate assembly of the platform of the 30S subunit by binding and bridging several RNA helices of the 16S rRNA. Forms an intersubunit bridge (bridge B4) with the 23S rRNA of the 50S subunit in the ribosome. The protein is Small ribosomal subunit protein uS15 of Desulfotalea psychrophila (strain LSv54 / DSM 12343).